Reading from the N-terminus, the 363-residue chain is DNA replication and repair protein RecF (363 aa).

ATP is bound at residue 31 to 38 (GANSSGKT).

It belongs to the RecF family.

It localises to the cytoplasm. The RecF protein is involved in DNA metabolism; it is required for DNA replication and normal SOS inducibility. RecF binds preferentially to single-stranded, linear DNA. It also seems to bind ATP. The chain is DNA replication and repair protein RecF from Nitrosococcus oceani (strain ATCC 19707 / BCRC 17464 / JCM 30415 / NCIMB 11848 / C-107).